The following is a 198-amino-acid chain: Suppressor of cytokine signaling 2 (198 aa).

The disordered stretch occupies residues 1–29; sequence MTLRCLEPSGNGADRTRSQWGTAGLPEEQ. The interval 1 to 75 is interaction with AREL1; sequence MTLRCLEPSG…PEGTFLIRDS (75 aa). Serine 30 is modified (phosphoserine). The region spanning 48-156 is the SH2 domain; sequence WYWGSMTVNE…TVHLYLTKPL (109 aa). Phosphoserine; by PKC is present on serine 52. One can recognise an SOCS box domain in the interval 151–197; it reads YLTKPLYTSAPTLQHFCRLAINKCTGTIWGLPLPTRLKDYLEEYKFQ. Residue lysine 173 forms a Glycyl lysine isopeptide (Lys-Gly) (interchain with G-Cter in ubiquitin) linkage.

Substrate-recognition component of the ECS(SOCS2) complex, composed of SOCS2, CUL5, ELOB, ELOC and RNF7/RBX2. Interacts with IGF1R. Interacts with DCUN1D1. Ubiquitinated; mediated by AREL1 and leading to its subsequent proteasomal degradation. Ubiquitination is dependent on phosphorylation at Ser-52, by PKC and is stimulated by LPS. In terms of processing, phosphorylation at Ser-52 by PKC facilitates its ubiquitination and proteasomal degradation. In terms of tissue distribution, expressed primarily in the testis, some expression in liver and lung.

The protein localises to the cytoplasm. It participates in protein modification; protein ubiquitination. Its function is as follows. Substrate-recognition component of a cullin-5-RING E3 ubiquitin-protein ligase complex (ECS complex, also named CRL5 complex), which mediates the ubiquitination and subsequent proteasomal degradation of target proteins, such as EPOR and GHR. Specifically recognizes and binds phosphorylated proteins via its SH2 domain, promoting their ubiquitination. The ECS(SOCS2) complex acts as a key regulator of growth hormone receptor (GHR) levels by mediating ubiquitination and degradation of GHR, following GHR phosphorylation by JAK2. The ECS(SOCS2) also catalyzes ubiquitination and degradation of JAK2-phosphorylated EPOR. This Mus musculus (Mouse) protein is Suppressor of cytokine signaling 2.